Here is an 81-residue protein sequence, read N- to C-terminus: Sulfur carrier protein TusA (81 aa).

The active-site Cysteine persulfide intermediate is the Cys19.

It belongs to the sulfur carrier protein TusA family.

The protein localises to the cytoplasm. Sulfur carrier protein which probably makes part of a sulfur-relay system. This Vibrio vulnificus (strain CMCP6) protein is Sulfur carrier protein TusA.